The chain runs to 115 residues: Superoxide reductase (115 aa).

Glu14, His16, His41, His47, Cys102, and His105 together coordinate Fe cation.

The protein belongs to the desulfoferrodoxin family. In terms of assembly, homotetramer. It depends on Fe cation as a cofactor.

The enzyme catalyses reduced [rubredoxin] + superoxide + 2 H(+) = oxidized [rubredoxin] + H2O2. Its function is as follows. Uses electrons from reduced NADP, by way of rubredoxin and an oxidoreductase, to catalyze the reduction of superoxide to hydrogen peroxide. This chain is Superoxide reductase (sorA), found in Thermococcus kodakarensis (strain ATCC BAA-918 / JCM 12380 / KOD1) (Pyrococcus kodakaraensis (strain KOD1)).